We begin with the raw amino-acid sequence, 163 residues long: Bacterial microcompartment assembly protein PduM (163 aa).

This sequence belongs to the PduM family. As to quaternary structure, interacts with shell protein PduK.

It localises to the bacterial microcompartment. Its pathway is polyol metabolism; 1,2-propanediol degradation. Plays an essential role in assembly and/or stability of the bacterial microcompartment (BMC) dedicated to 1,2-propanediol (1,2-PD) degradation. Its function is as follows. Expression of a cosmid containing the full 21-gene pdu operon in E.coli allows E.coli to grow on 1,2-propanediol (1,2-PD) with the appearance of bacterial microcompartments (BMC) in its cytoplasm. Functionally, the 1,2-PD-specific bacterial microcompartment (BMC) concentrates low levels of 1,2-PD catabolic enzymes, concentrates volatile reaction intermediates thus enhancing pathway flux and keeps the level of toxic, mutagenic propionaldehyde low. The chain is Bacterial microcompartment assembly protein PduM from Citrobacter freundii.